The sequence spans 59 residues: UPF0339 protein CC_2965 (59 aa).

It belongs to the UPF0339 family.

The sequence is that of UPF0339 protein CC_2965 from Caulobacter vibrioides (strain ATCC 19089 / CIP 103742 / CB 15) (Caulobacter crescentus).